A 607-amino-acid chain; its full sequence is Serine/threonine-protein kinase sid2 (607 aa).

A phosphoserine mark is found at Ser-56, Ser-60, Ser-65, and Ser-86. Over residues 93–108 (DRSGELSYKDNNHWSD) the composition is skewed to basic and acidic residues. Residues 93–118 (DRSGELSYKDNNHWSDRSSTGSPRWE) form a disordered region. A compositionally biased stretch (polar residues) spans 109-118 (RSSTGSPRWE). One can recognise a Protein kinase domain in the interval 208–508 (FQTITQVGQG…LKQVMQHPYF (301 aa)). Residues 214–222 (VGQGGYGSV) and Lys-237 contribute to the ATP site. Residue Tyr-219 is modified to Phosphotyrosine. Asp-331 serves as the catalytic Proton acceptor. A Phosphoserine modification is found at Ser-402. The 81-residue stretch at 509-589 (SKIDWKNVRT…RHQKNSHPTS (81 aa)) folds into the AGC-kinase C-terminal domain. The interval 586–607 (HPTSSSSALSSPLSAPSFGTLL) is disordered. Over residues 589–607 (SSSSALSSPLSAPSFGTLL) the composition is skewed to low complexity.

Belongs to the protein kinase superfamily. Ser/Thr protein kinase family. In terms of assembly, interacts with mob1 and cdc11.

The protein localises to the cytoplasm. The protein resides in the cytoskeleton. It localises to the microtubule organizing center. It is found in the spindle pole body. The enzyme catalyses L-seryl-[protein] + ATP = O-phospho-L-seryl-[protein] + ADP + H(+). It catalyses the reaction L-threonyl-[protein] + ATP = O-phospho-L-threonyl-[protein] + ADP + H(+). Its function is as follows. Part of a signaling pathway. Required for initiation of medial ring constriction and septation. This is Serine/threonine-protein kinase sid2 (sid2) from Schizosaccharomyces pombe (strain 972 / ATCC 24843) (Fission yeast).